A 144-amino-acid chain; its full sequence is Cytochrome c-type biogenesis protein CcmE (144 aa).

At 1-7 (MKPRHKR) the chain is on the cytoplasmic side. Residues 8 to 28 (ALMIVAALAVIGIAALLILNA) traverse the membrane as a helical; Signal-anchor for type II membrane protein segment. Over 29–144 (LNSNIALYVT…EQAQKNGSAK (116 aa)) the chain is Extracellular. The heme site is built by H121 and Y125.

It belongs to the CcmE/CycJ family.

It is found in the cell membrane. Heme chaperone required for the biogenesis of c-type cytochromes. Transiently binds heme delivered by CcmC and transfers the heme to apo-cytochromes in a process facilitated by CcmF and CcmH. In Polynucleobacter asymbioticus (strain DSM 18221 / CIP 109841 / QLW-P1DMWA-1) (Polynucleobacter necessarius subsp. asymbioticus), this protein is Cytochrome c-type biogenesis protein CcmE.